The following is a 232-amino-acid chain: Ribose-5-phosphate isomerase A (232 aa).

Substrate contacts are provided by residues 31-34, 87-90, and 100-103; these read TGST, DGAD, and KGGG. Glu109 functions as the Proton acceptor in the catalytic mechanism. Lys127 contributes to the substrate binding site.

This sequence belongs to the ribose 5-phosphate isomerase family. In terms of assembly, homodimer.

The catalysed reaction is aldehydo-D-ribose 5-phosphate = D-ribulose 5-phosphate. It functions in the pathway carbohydrate degradation; pentose phosphate pathway; D-ribose 5-phosphate from D-ribulose 5-phosphate (non-oxidative stage): step 1/1. In terms of biological role, catalyzes the reversible conversion of ribose-5-phosphate to ribulose 5-phosphate. The sequence is that of Ribose-5-phosphate isomerase A from Bifidobacterium longum subsp. infantis (strain ATCC 15697 / DSM 20088 / JCM 1222 / NCTC 11817 / S12).